A 917-amino-acid polypeptide reads, in one-letter code: Ion channel POLLUX (917 aa).

Positions 1–154 (MIPLPVAAAN…SSSPVARPQH (154 aa)) are disordered. Low complexity predominate over residues 7 to 19 (AAANSNSNSNSNS). The segment covering 78–89 (HQWNYPSFLGTT) has biased composition (polar residues). The span at 119 to 136 (KTNTNTNTNTNTNTNTNT) shows a compositional bias: low complexity. Transmembrane regions (helical) follow at residues 160 to 180 (PPIF…SSYL), 230 to 250 (LYIV…LDYL), 290 to 310 (LALL…LYAV), and 342 to 362 (VVSV…LGLV). RCK N-terminal domains follow at residues 383–524 (RNHI…ETVV) and 643–792 (PEKI…DKSI). Positions 413 to 435 (VIVVLAEKEKEEMEMDITKLEFD) form a coiled coil.

The protein belongs to the castor/pollux (TC 1.A.1.23) family. Homooligomer. As to expression, mainly expressed in nodules. Also detected in infected and uninfected roots, leaves, seed pods, and flower buds.

Its subcellular location is the nucleus membrane. Functionally, ion channel with permeability for potassium. Involved in perinuclear calcium spiking but not in cytosolic calcium influx. Required for early signal transduction events leading to endosymbiosis. Acts early in a signal transduction chain leading from the perception of Nod factor to the activation of calcium spiking. Also involved in fungal entry into root epidermal cells during the establishment of the arbuscular mycorrhizal symbiosis. This chain is Ion channel POLLUX (POLLUX), found in Lotus japonicus (Lotus corniculatus var. japonicus).